The chain runs to 361 residues: Phospho-N-acetylmuramoyl-pentapeptide-transferase (361 aa).

The next 10 helical transmembrane spans lie at 25-45 (TGGA…WIIN), 72-92 (TPTM…VLWA), 95-115 (VNPY…VGFY), 133-153 (TRLL…VWLG), 169-189 (VVLN…VGAG), 200-220 (GLAI…AYLA), 240-260 (LAVL…FNAP), 264-284 (IFMG…IAVA), 289-309 (IVLA…IVQV), and 338-358 (QIVI…LATL).

It belongs to the glycosyltransferase 4 family. MraY subfamily. It depends on Mg(2+) as a cofactor.

The protein localises to the cell inner membrane. It catalyses the reaction UDP-N-acetyl-alpha-D-muramoyl-L-alanyl-gamma-D-glutamyl-meso-2,6-diaminopimeloyl-D-alanyl-D-alanine + di-trans,octa-cis-undecaprenyl phosphate = di-trans,octa-cis-undecaprenyl diphospho-N-acetyl-alpha-D-muramoyl-L-alanyl-D-glutamyl-meso-2,6-diaminopimeloyl-D-alanyl-D-alanine + UMP. It functions in the pathway cell wall biogenesis; peptidoglycan biosynthesis. Its function is as follows. Catalyzes the initial step of the lipid cycle reactions in the biosynthesis of the cell wall peptidoglycan: transfers peptidoglycan precursor phospho-MurNAc-pentapeptide from UDP-MurNAc-pentapeptide onto the lipid carrier undecaprenyl phosphate, yielding undecaprenyl-pyrophosphoryl-MurNAc-pentapeptide, known as lipid I. The protein is Phospho-N-acetylmuramoyl-pentapeptide-transferase of Rhodopseudomonas palustris (strain BisB5).